The chain runs to 78 residues: MSDTVERVKKIIVEHLGVNADKVVEDASFIDDLGADSLDTVELVMAFEEEFGVEIPDEAAETIFTVGDAVKFIDKASA.

The region spanning 2–77 (SDTVERVKKI…DAVKFIDKAS (76 aa)) is the Carrier domain. At S37 the chain carries O-(pantetheine 4'-phosphoryl)serine.

This sequence belongs to the acyl carrier protein (ACP) family. 4'-phosphopantetheine is transferred from CoA to a specific serine of apo-ACP by AcpS. This modification is essential for activity because fatty acids are bound in thioester linkage to the sulfhydryl of the prosthetic group.

The protein resides in the cytoplasm. It participates in lipid metabolism; fatty acid biosynthesis. Its function is as follows. Carrier of the growing fatty acid chain in fatty acid biosynthesis. This Bartonella henselae (strain ATCC 49882 / DSM 28221 / CCUG 30454 / Houston 1) (Rochalimaea henselae) protein is Acyl carrier protein.